The chain runs to 211 residues: Probable cytokinin riboside 5'-monophosphate phosphoribohydrolase LOGL3 (211 aa).

Substrate-binding positions include E84, 102–103 (RK), 119–125 (GYGTLEE), and T131.

Belongs to the LOG family. As to expression, expressed in roots, leaves, stems, tiller buds, shoot apex, immature inflorescences and flowers.

The catalysed reaction is N(6)-(dimethylallyl)adenosine 5'-phosphate + H2O = N(6)-dimethylallyladenine + D-ribose 5-phosphate. It catalyses the reaction 9-ribosyl-trans-zeatin 5'-phosphate + H2O = trans-zeatin + D-ribose 5-phosphate. Cytokinin-activating enzyme working in the direct activation pathway. Phosphoribohydrolase that converts inactive cytokinin nucleotides to the biologically active free-base forms. The sequence is that of Probable cytokinin riboside 5'-monophosphate phosphoribohydrolase LOGL3 (LOGL3) from Oryza sativa subsp. japonica (Rice).